A 379-amino-acid chain; its full sequence is UDP-N-acetylglucosamine--N-acetylmuramyl-(pentapeptide) pyrophosphoryl-undecaprenol N-acetylglucosamine transferase (379 aa).

UDP-N-acetyl-alpha-D-glucosamine-binding positions include 13–15 (TGG), Asn123, Arg166, Ser194, and Gln295.

This sequence belongs to the glycosyltransferase 28 family. MurG subfamily.

The protein localises to the cell inner membrane. It carries out the reaction di-trans,octa-cis-undecaprenyl diphospho-N-acetyl-alpha-D-muramoyl-L-alanyl-D-glutamyl-meso-2,6-diaminopimeloyl-D-alanyl-D-alanine + UDP-N-acetyl-alpha-D-glucosamine = di-trans,octa-cis-undecaprenyl diphospho-[N-acetyl-alpha-D-glucosaminyl-(1-&gt;4)]-N-acetyl-alpha-D-muramoyl-L-alanyl-D-glutamyl-meso-2,6-diaminopimeloyl-D-alanyl-D-alanine + UDP + H(+). It functions in the pathway cell wall biogenesis; peptidoglycan biosynthesis. Cell wall formation. Catalyzes the transfer of a GlcNAc subunit on undecaprenyl-pyrophosphoryl-MurNAc-pentapeptide (lipid intermediate I) to form undecaprenyl-pyrophosphoryl-MurNAc-(pentapeptide)GlcNAc (lipid intermediate II). This chain is UDP-N-acetylglucosamine--N-acetylmuramyl-(pentapeptide) pyrophosphoryl-undecaprenol N-acetylglucosamine transferase, found in Rhodospirillum centenum (strain ATCC 51521 / SW).